Consider the following 638-residue polypeptide: ATP-dependent rRNA helicase spb4 (638 aa).

Positions 14 to 42 match the Q motif motif; sequence WDAVNPPLSEWVLDAVSSMGFTRMTPVQA. In terms of domain architecture, Helicase ATP-binding spans 45-249; the sequence is IPLFMAHKDV…RVGLRNPVKV (205 aa). 58–65 lines the ATP pocket; it reads AVTGSGKT. The short motif at 197–200 is the DEAD box element; it reads DEAD. The region spanning 283-437 is the Helicase C-terminal domain; that stretch reads ALKHILNSVQ…PITVSDAEAA (155 aa). Positions 521–629 form a coiled coil; the sequence is AYKDKQREKR…AKADKDAEEG (109 aa). The disordered stretch occupies residues 538 to 638; sequence MAESGQQQTT…GGDEEFTGFD (101 aa). Residues 574 to 597 show a composition bias toward basic and acidic residues; sequence MKQVRQERKRWEKMTEEEKKKALE. Residues 625-638 show a composition bias toward acidic residues; sequence DAEEGGDEEFTGFD.

Belongs to the DEAD box helicase family. DDX55/SPB4 subfamily. Component of pre-60S ribosomal complexes.

It is found in the nucleus. Its subcellular location is the nucleolus. It carries out the reaction ATP + H2O = ADP + phosphate + H(+). ATP-binding RNA helicase involved in the biogenesis of 60S ribosomal subunits. Binds 90S pre-ribosomal particles and dissociates from pre-60S ribosomal particles after processing of 27SB pre-rRNA. Required for the normal formation of 18S rRNA through the processing of pre-rRNAs at sites A0, A1 and A2, and the normal formation of 25S and 5.8S rRNAs through the processing of pre-rRNAs at sites C1 and C2. The protein is ATP-dependent rRNA helicase spb4 of Emericella nidulans (strain FGSC A4 / ATCC 38163 / CBS 112.46 / NRRL 194 / M139) (Aspergillus nidulans).